A 287-amino-acid polypeptide reads, in one-letter code: ATP synthase gamma chain (287 aa).

The protein belongs to the ATPase gamma chain family. As to quaternary structure, F-type ATPases have 2 components, CF(1) - the catalytic core - and CF(0) - the membrane proton channel. CF(1) has five subunits: alpha(3), beta(3), gamma(1), delta(1), epsilon(1). CF(0) has three main subunits: a, b and c.

It localises to the cell membrane. Functionally, produces ATP from ADP in the presence of a proton gradient across the membrane. The gamma chain is believed to be important in regulating ATPase activity and the flow of protons through the CF(0) complex. The polypeptide is ATP synthase gamma chain (Bacillus caldotenax).